A 384-amino-acid chain; its full sequence is Deoxyguanosinetriphosphate triphosphohydrolase-like protein (384 aa).

One can recognise an HD domain in the interval 62–198 (RLTHSLEVST…AALADDISYI (137 aa)).

The protein belongs to the dGTPase family. Type 2 subfamily.

The sequence is that of Deoxyguanosinetriphosphate triphosphohydrolase-like protein from Rickettsia rickettsii (strain Iowa).